A 447-amino-acid chain; its full sequence is Phosphoglucosamine mutase (447 aa).

The Phosphoserine intermediate role is filled by Ser-101. The Mg(2+) site is built by Ser-101, Asp-242, Asp-244, and Asp-246. Ser-101 bears the Phosphoserine mark.

It belongs to the phosphohexose mutase family. Mg(2+) serves as cofactor. Post-translationally, activated by phosphorylation.

It carries out the reaction alpha-D-glucosamine 1-phosphate = D-glucosamine 6-phosphate. Catalyzes the conversion of glucosamine-6-phosphate to glucosamine-1-phosphate. The polypeptide is Phosphoglucosamine mutase (Bradyrhizobium diazoefficiens (strain JCM 10833 / BCRC 13528 / IAM 13628 / NBRC 14792 / USDA 110)).